We begin with the raw amino-acid sequence, 284 residues long: Small ribosomal subunit protein uS5z (284 aa).

Basic and acidic residues predominate over residues 1–19 (MAERGGEGGAERGGDRGDF). The interval 1 to 51 (MAERGGEGGAERGGDRGDFGRGFGGGRGGGRGRDRGPRGRGRRGGRASEET) is disordered. A compositionally biased stretch (gly residues) spans 20–29 (GRGFGGGRGG). In terms of domain architecture, S5 DRBM spans 95 to 158 (LKDEVMKIMP…ILAKLSVVPV (64 aa)).

Belongs to the universal ribosomal protein uS5 family.

In Arabidopsis thaliana (Mouse-ear cress), this protein is Small ribosomal subunit protein uS5z (RPS2A).